The sequence spans 365 residues: Peptide chain release factor 2 (365 aa).

An N5-methylglutamine modification is found at Q252.

This sequence belongs to the prokaryotic/mitochondrial release factor family. In terms of processing, methylated by PrmC. Methylation increases the termination efficiency of RF2.

It is found in the cytoplasm. In terms of biological role, peptide chain release factor 2 directs the termination of translation in response to the peptide chain termination codons UGA and UAA. In Tolumonas auensis (strain DSM 9187 / NBRC 110442 / TA 4), this protein is Peptide chain release factor 2.